The sequence spans 58 residues: Weak neurotoxin D2B (58 aa).

3 disulfides stabilise this stretch: cysteine 3–cysteine 24, cysteine 17–cysteine 41, and cysteine 43–cysteine 54.

Expressed by the venom gland.

It localises to the secreted. In terms of biological role, binds to muscle nicotinic acetylcholine receptor (nAChR) and inhibit acetylcholine from binding to the receptor, thereby impairing neuromuscular transmission. This Micrurus pyrrhocryptus (Coral snake) protein is Weak neurotoxin D2B.